The primary structure comprises 211 residues: Urease accessory protein UreG (211 aa).

11–18 contacts GTP; the sequence is GPVGAGKT.

The protein belongs to the SIMIBI class G3E GTPase family. UreG subfamily. Homodimer. UreD, UreF and UreG form a complex that acts as a GTP-hydrolysis-dependent molecular chaperone, activating the urease apoprotein by helping to assemble the nickel containing metallocenter of UreC. The UreE protein probably delivers the nickel.

It localises to the cytoplasm. Its function is as follows. Facilitates the functional incorporation of the urease nickel metallocenter. This process requires GTP hydrolysis, probably effectuated by UreG. The sequence is that of Urease accessory protein UreG from Actinobacillus pleuropneumoniae (Haemophilus pleuropneumoniae).